We begin with the raw amino-acid sequence, 318 residues long: Ribosomal RNA small subunit methyltransferase H (318 aa).

Residues G37–H39, D56, Y83, D104, and Q111 contribute to the S-adenosyl-L-methionine site. A disordered region spans residues E293–E318.

This sequence belongs to the methyltransferase superfamily. RsmH family.

It is found in the cytoplasm. The catalysed reaction is cytidine(1402) in 16S rRNA + S-adenosyl-L-methionine = N(4)-methylcytidine(1402) in 16S rRNA + S-adenosyl-L-homocysteine + H(+). In terms of biological role, specifically methylates the N4 position of cytidine in position 1402 (C1402) of 16S rRNA. This Streptomyces avermitilis (strain ATCC 31267 / DSM 46492 / JCM 5070 / NBRC 14893 / NCIMB 12804 / NRRL 8165 / MA-4680) protein is Ribosomal RNA small subunit methyltransferase H.